Here is a 312-residue protein sequence, read N- to C-terminus: Glyoxylate/hydroxypyruvate reductase A (312 aa).

Residue R227 is part of the active site. The active-site Proton donor is H275.

The protein belongs to the D-isomer specific 2-hydroxyacid dehydrogenase family. GhrA subfamily.

The protein resides in the cytoplasm. The catalysed reaction is glycolate + NADP(+) = glyoxylate + NADPH + H(+). It catalyses the reaction (R)-glycerate + NAD(+) = 3-hydroxypyruvate + NADH + H(+). It carries out the reaction (R)-glycerate + NADP(+) = 3-hydroxypyruvate + NADPH + H(+). Functionally, catalyzes the NADPH-dependent reduction of glyoxylate and hydroxypyruvate into glycolate and glycerate, respectively. The protein is Glyoxylate/hydroxypyruvate reductase A of Escherichia coli O6:K15:H31 (strain 536 / UPEC).